The primary structure comprises 204 residues: Putative AgrB-like protein (204 aa).

The next 4 membrane-spanning stretches (helical) occupy residues 52-74, 87-107, 111-131, and 156-176; these read YGIA…YLWL, LNCT…FQNI, NWIV…FAPA, and LILT…LIMV.

Belongs to the AgrB family.

It is found in the cell membrane. Functionally, may be involved in the proteolytic processing of a quorum sensing system signal molecule precursor. This is Putative AgrB-like protein from Listeria monocytogenes serotype 4b (strain CLIP80459).